Reading from the N-terminus, the 356-residue chain is Ferrochelatase (356 aa).

Fe cation contacts are provided by histidine 214 and glutamate 295.

It belongs to the ferrochelatase family.

It is found in the cytoplasm. The catalysed reaction is heme b + 2 H(+) = protoporphyrin IX + Fe(2+). The protein operates within porphyrin-containing compound metabolism; protoheme biosynthesis; protoheme from protoporphyrin-IX: step 1/1. Its function is as follows. Catalyzes the ferrous insertion into protoporphyrin IX. This is Ferrochelatase from Paraburkholderia phytofirmans (strain DSM 17436 / LMG 22146 / PsJN) (Burkholderia phytofirmans).